Consider the following 102-residue polypeptide: MVDSSYFNRSSTNIIKYPIITDKATRLLENNQYSFIVNPYSDKITIKAAIEYLFNVKVIKVNTCHLPKKKKRVGKYLGWKSHYKKAIVTLSQGDRINLFAEN.

This sequence belongs to the universal ribosomal protein uL23 family. In terms of assembly, part of the 50S ribosomal subunit.

The protein localises to the plastid. It is found in the chloroplast. Binds to 23S rRNA. In Trieres chinensis (Marine centric diatom), this protein is Large ribosomal subunit protein uL23c (rpl23).